The following is an 83-amino-acid chain: Disintegrin bitistatin (83 aa).

Residues 2-83 enclose the Disintegrin domain; that stretch reads PPVCGNKILE…GKSSDCPWNH (82 aa). 10 disulfide bridges follow: C5/C24, C5/C34, C16/C29, C16/C34, C18/C24, C18/C29, C28/C51, C42/C48, C47/C72, and C60/C79. The Cell attachment site motif lies at 64-66; sequence RGD.

It belongs to the venom metalloproteinase (M12B) family. P-II subfamily. P-IIa sub-subfamily. As to quaternary structure, monomer. Exists in 3 forms in the venom. The forms A, B, and C are present at 53%, 32% and 15%. The forms A and B differ by their disulfide bond pattern in the N-terminal part. No information is known about form C. As to expression, expressed by the venom gland.

It localises to the secreted. In terms of biological role, inhibits fibrinogen interaction with platelets. Acts by binding to alpha-IIb/beta-3 (ITGA2B/ITGB3) on the platelet surface and inhibits aggregation induced by ADP, thrombin, platelet-activating factor and collagen. The sequence is that of Disintegrin bitistatin from Bitis arietans (African puff adder).